Here is a 582-residue protein sequence, read N- to C-terminus: Membrane protein insertase YidC (582 aa).

Helical transmembrane passes span 4–24 (NTVL…YIQQ), 376–396 (IIPN…IIFF), 446–466 (ASGC…FGLF), and 542–562 (FMPL…LLFW).

It belongs to the OXA1/ALB3/YidC family. Type 1 subfamily. As to quaternary structure, interacts with the Sec translocase complex via SecD. Specifically interacts with transmembrane segments of nascent integral membrane proteins during membrane integration.

It localises to the cell inner membrane. Its function is as follows. Required for the insertion and/or proper folding and/or complex formation of integral membrane proteins into the membrane. Involved in integration of membrane proteins that insert both dependently and independently of the Sec translocase complex, as well as at least some lipoproteins. Aids folding of multispanning membrane proteins. This is Membrane protein insertase YidC from Treponema denticola (strain ATCC 35405 / DSM 14222 / CIP 103919 / JCM 8153 / KCTC 15104).